A 146-amino-acid polypeptide reads, in one-letter code: Leghemoglobin 1 (146 aa).

A Globin domain is found at 2-146 (GFTEKQEALV…LAAAIKKAMG (145 aa)). Tyrosine 29 bears the Nitrated tyrosine mark. Serine 44 is a binding site for heme b. Serine 44 carries the post-translational modification Phosphoserine. Histidine 61 is an O2 binding site. Heme b is bound by residues lysine 64, histidine 93, and lysine 96. Tyrosine 134 bears the Nitrated tyrosine mark.

This sequence belongs to the plant globin family. As to quaternary structure, monomer. Post-translationally, nitrated in effective nodules and particularly in hypoxic conditions; this mechanism may play a protective role in the symbiosis by buffering toxic peroxynitrite NO(2)(-). Nitration level decrease during nodule senescence. Phosphorylation at Ser-44 disrupts the molecular environment of its porphyrin ring oxygen binding pocket, thus leading to a reduced oxygen consumption and to the delivery of oxygen O(2) to symbiosomes. In terms of tissue distribution, root nodules.

It is found in the cytoplasm. Its subcellular location is the cytosol. The protein localises to the nucleus. In terms of biological role, leghemoglobin that reversibly binds oxygen O(2) through a pentacoordinated heme iron. In root nodules, facilitates the diffusion of oxygen to the bacteroids while preventing the bacterial nitrogenase from being inactivated by buffering dioxygen, nitric oxide and carbon monoxide, and promoting the formation of reactive oxygen species (ROS, e.g. H(2)O(2)). This role is essential for symbiotic nitrogen fixation (SNF). This chain is Leghemoglobin 1, found in Medicago truncatula (Barrel medic).